Consider the following 75-residue polypeptide: Small ribosomal subunit protein bS18 (75 aa).

It belongs to the bacterial ribosomal protein bS18 family. Part of the 30S ribosomal subunit. Forms a tight heterodimer with protein bS6.

Its function is as follows. Binds as a heterodimer with protein bS6 to the central domain of the 16S rRNA, where it helps stabilize the platform of the 30S subunit. The protein is Small ribosomal subunit protein bS18 of Aliivibrio fischeri (strain ATCC 700601 / ES114) (Vibrio fischeri).